A 297-amino-acid chain; its full sequence is UBX domain-containing protein 1 (297 aa).

The residue at position 2 (Ala-2) is an N-acetylalanine. The UBA domain occupies 2-42 (AELTALESLIEMGFPKGRAEKALALTGNQGIEAAMDWLMEH). Residues 40–210 (MEHEDDPDVD…PSREPPTKRE (171 aa)) form a disordered region. Residues 43-297 (EDDPDVDEPL…VLIVAKKCPG (255 aa)) are interaction with BRCA1. 2 stretches are compositionally biased toward basic and acidic residues: residues 86–122 (LTEE…ERER) and 137–177 (RLQE…ERAK). The stretch at 86-176 (LTEEERQEQT…KIERDKAERA (91 aa)) forms a coiled coil. Positions 187-199 (PSPPATEPGPVPS) are enriched in pro residues. Ser-199 is modified (phosphoserine). Ser-200 carries the phosphoserine; by MAPK12 modification. Phosphothreonine is present on residues Thr-207 and Thr-229. The 83-residue stretch at 209 to 291 (REYDQCRIQV…GLVPSAVLIV (83 aa)) folds into the UBX domain. Ser-270 carries the phosphoserine modification.

Component of a complex required to couple retrotranslocation, ubiquitination and deglycosylation composed of NGLY1, SAKS1, AMFR, VCP and RAD23B. Interacts with HOMER2. Interacts directly with VCP. Interacts with BRCA1 and BARD1; interaction takes place when BRCA1 is not autoubiquitinated bur is strongly enhanced in the presence of autoubiquitinated BRCA1.

The protein resides in the cytoplasm. Ubiquitin-binding protein that interacts with the BRCA1-BARD1 heterodimer, and regulates its activity. Specifically binds 'Lys-6'-linked polyubiquitin chains. Interaction with autoubiquitinated BRCA1, leads to inhibit the E3 ubiquitin-protein ligase activity of the BRCA1-BARD1 heterodimer. Component of a complex required to couple deglycosylation and proteasome-mediated degradation of misfolded proteins in the endoplasmic reticulum that are retrotranslocated in the cytosol. The protein is UBX domain-containing protein 1 (UBXN1) of Bos taurus (Bovine).